The following is a 363-amino-acid chain: S-adenosylmethionine:tRNA ribosyltransferase-isomerase (363 aa).

It belongs to the QueA family. Monomer.

It localises to the cytoplasm. It catalyses the reaction 7-aminomethyl-7-carbaguanosine(34) in tRNA + S-adenosyl-L-methionine = epoxyqueuosine(34) in tRNA + adenine + L-methionine + 2 H(+). It functions in the pathway tRNA modification; tRNA-queuosine biosynthesis. Functionally, transfers and isomerizes the ribose moiety from AdoMet to the 7-aminomethyl group of 7-deazaguanine (preQ1-tRNA) to give epoxyqueuosine (oQ-tRNA). This chain is S-adenosylmethionine:tRNA ribosyltransferase-isomerase, found in Brucella abortus (strain S19).